A 155-amino-acid polypeptide reads, in one-letter code: dCTP deaminase (155 aa).

Residues Arg-79–Arg-84, Asp-95, Gln-124, and Tyr-138 each bind dCTP.

Belongs to the dCTP deaminase family. As to quaternary structure, homotrimer.

The enzyme catalyses dCTP + H2O + H(+) = dUTP + NH4(+). The protein operates within pyrimidine metabolism; dUMP biosynthesis; dUMP from dCTP (dUTP route): step 1/2. Functionally, catalyzes the deamination of dCTP to dUTP. The protein is dCTP deaminase of Thermococcus kodakarensis (strain ATCC BAA-918 / JCM 12380 / KOD1) (Pyrococcus kodakaraensis (strain KOD1)).